The primary structure comprises 468 residues: ATP synthase subunit beta (468 aa).

148–155 (GGAGVGKT) contributes to the ATP binding site.

The protein belongs to the ATPase alpha/beta chains family. In terms of assembly, F-type ATPases have 2 components, CF(1) - the catalytic core - and CF(0) - the membrane proton channel. CF(1) has five subunits: alpha(3), beta(3), gamma(1), delta(1), epsilon(1). CF(0) has three main subunits: a(1), b(2) and c(9-12). The alpha and beta chains form an alternating ring which encloses part of the gamma chain. CF(1) is attached to CF(0) by a central stalk formed by the gamma and epsilon chains, while a peripheral stalk is formed by the delta and b chains.

The protein resides in the cell inner membrane. It catalyses the reaction ATP + H2O + 4 H(+)(in) = ADP + phosphate + 5 H(+)(out). Its function is as follows. Produces ATP from ADP in the presence of a proton gradient across the membrane. The catalytic sites are hosted primarily by the beta subunits. This chain is ATP synthase subunit beta, found in Xanthomonas axonopodis pv. citri (strain 306).